Reading from the N-terminus, the 354-residue chain is MAIKRNQGSNPKPEKKERLTKAETHQEQDNLEESIRPHSFDEYIGQKDLKDVLSIVIEAAKTRNEPMDHLLLYGPPGLGKTTISLILASAMGVNCKITAAPALERPRDITGLLVSLKPGDILFIDEIHRLNRLTEELLYPAMEDYRLEITIGKGQAARTRSIPLPKFTLVGATTKVGSLTSPLRDRFGLIQRLKFYEPEELALIIKRTAKLLNTSITEQGAAEIGRRSRGTPRIANRLLRRVRDYIQVKKFDSITQELAAEALDIYQVDPQGLDWTDRLILDTMITQFNGGPVGLEAVAAATGEDAKTIEEVYEPYLLQIGYLNRTPRGRVVTTVAYQHLGKTGEEQLSIFSEQ.

A compositionally biased stretch (polar residues) spans methionine 1–asparagine 10. Positions methionine 1–arginine 36 are disordered. Residues lysine 12 to arginine 36 are compositionally biased toward basic and acidic residues. Residues proline 13–tyrosine 196 are large ATPase domain (RuvB-L). Residues isoleucine 35, arginine 36, glycine 77, lysine 80, threonine 81, threonine 82, glutamate 143–tyrosine 145, arginine 186, tyrosine 196, and arginine 233 each bind ATP. Residue threonine 81 coordinates Mg(2+). The tract at residues glutamate 197 to glutamine 267 is small ATPAse domain (RuvB-S). Positions proline 270–glutamine 354 are head domain (RuvB-H). Residues arginine 325 and arginine 330 each coordinate DNA.

Belongs to the RuvB family. Homohexamer. Forms an RuvA(8)-RuvB(12)-Holliday junction (HJ) complex. HJ DNA is sandwiched between 2 RuvA tetramers; dsDNA enters through RuvA and exits via RuvB. An RuvB hexamer assembles on each DNA strand where it exits the tetramer. Each RuvB hexamer is contacted by two RuvA subunits (via domain III) on 2 adjacent RuvB subunits; this complex drives branch migration. In the full resolvosome a probable DNA-RuvA(4)-RuvB(12)-RuvC(2) complex forms which resolves the HJ.

It is found in the cytoplasm. The catalysed reaction is ATP + H2O = ADP + phosphate + H(+). Functionally, the RuvA-RuvB-RuvC complex processes Holliday junction (HJ) DNA during genetic recombination and DNA repair, while the RuvA-RuvB complex plays an important role in the rescue of blocked DNA replication forks via replication fork reversal (RFR). RuvA specifically binds to HJ cruciform DNA, conferring on it an open structure. The RuvB hexamer acts as an ATP-dependent pump, pulling dsDNA into and through the RuvAB complex. RuvB forms 2 homohexamers on either side of HJ DNA bound by 1 or 2 RuvA tetramers; 4 subunits per hexamer contact DNA at a time. Coordinated motions by a converter formed by DNA-disengaged RuvB subunits stimulates ATP hydrolysis and nucleotide exchange. Immobilization of the converter enables RuvB to convert the ATP-contained energy into a lever motion, pulling 2 nucleotides of DNA out of the RuvA tetramer per ATP hydrolyzed, thus driving DNA branch migration. The RuvB motors rotate together with the DNA substrate, which together with the progressing nucleotide cycle form the mechanistic basis for DNA recombination by continuous HJ branch migration. Branch migration allows RuvC to scan DNA until it finds its consensus sequence, where it cleaves and resolves cruciform DNA. In Crocosphaera subtropica (strain ATCC 51142 / BH68) (Cyanothece sp. (strain ATCC 51142)), this protein is Holliday junction branch migration complex subunit RuvB.